The following is a 164-amino-acid chain: IQSTNMDQQGSLTEDSMNSFIRTLIQAGIWKNKVPKQTARAKDDTQTTVKKTEAEADAVASKEARLGFQPIVSVDAELLRQQRRFSSPRVLLSENTPLEPPPLYLTEQPVALNRTSRRKREGKSHRGEYSVCDSESRWVTDKSSAVDIRGHQVTVLGEIRMGPS.

The N-terminal stretch at 1–3 (IQS) is a signal peptide. Residues 4–120 (TNMDQQGSLT…ALNRTSRRKR (117 aa)) constitute a propeptide that is removed on maturation. N-linked (GlcNAc...) asparagine glycosylation occurs at Asn113.

This sequence belongs to the NGF-beta family.

It localises to the secreted. Its function is as follows. Seems to promote the survival of visceral and proprioceptive sensory neurons. This is Neurotrophin-3 (NTF3) from Sanzinia madagascariensis (Madagascar tree boa).